The following is a 303-amino-acid chain: Probable 5-dehydro-4-deoxyglucarate dehydratase (303 aa).

It belongs to the DapA family.

The enzyme catalyses 5-dehydro-4-deoxy-D-glucarate + H(+) = 2,5-dioxopentanoate + CO2 + H2O. It functions in the pathway carbohydrate acid metabolism; D-glucarate degradation; 2,5-dioxopentanoate from D-glucarate: step 2/2. This Acinetobacter baumannii (strain ATCC 17978 / DSM 105126 / CIP 53.77 / LMG 1025 / NCDC KC755 / 5377) protein is Probable 5-dehydro-4-deoxyglucarate dehydratase.